The primary structure comprises 270 residues: Glutamate racemase (270 aa).

Substrate contacts are provided by residues 7 to 8 and 39 to 40; these read DS and YG. Cys70 acts as the Proton donor/acceptor in catalysis. A substrate-binding site is contributed by 71-72; it reads NT. Residue Cys194 is the Proton donor/acceptor of the active site. 195 to 196 contributes to the substrate binding site; sequence TH.

Belongs to the aspartate/glutamate racemases family.

The enzyme catalyses L-glutamate = D-glutamate. The protein operates within cell wall biogenesis; peptidoglycan biosynthesis. Functionally, provides the (R)-glutamate required for cell wall biosynthesis. This chain is Glutamate racemase, found in Paracoccus denitrificans (strain Pd 1222).